The chain runs to 143 residues: Competence protein ComGD (143 aa).

A propeptide spanning residues 1-10 (MNIKLNEEKG) is cleaved from the precursor. At phenylalanine 11 the chain carries N-methylphenylalanine. Residues 11–31 (FTLLESLLVLSLASILLVAVF) traverse the membrane as a helical segment.

As to quaternary structure, the transformation pili are flexible filaments, consisting mainly of the major pilin ComGC and smaller amounts of the minor pilins, including at least ComGD, ComGF and ComGG. Interacts with ComGF. Interacts with ComGG. Post-translationally, processing of ComGD in competent cells requires ComC.

The protein localises to the cell membrane. It localises to the cell surface. In terms of biological role, required for formation of the type IV-like pilus (T4P) that plays a role in transformation. Transformation pili are dynamically extended and retracted, perhaps thereby promoting DNA uptake and transformation. Required for transformation and DNA binding. The sequence is that of Competence protein ComGD (comGD) from Bacillus subtilis (strain 168).